Reading from the N-terminus, the 957-residue chain is Protein CRT10 (957 aa).

Residues 695 to 719 (NSTEEDDVNSDPENEESGSSLTSFQ) form a disordered region. The segment covering 697-710 (TEEDDVNSDPENEE) has biased composition (acidic residues). Ser704 is modified (phosphoserine).

As to quaternary structure, component of a cullin-RING ligase (CRL) composed of 4 subunits: the RING protein HRT1, the cullin RTT101, a linker protein MMS1, and the substrate receptor CRT10. Interacts with MMS1.

Its function is as follows. Substrate targeting component of a cullin-RING-based E3 ubiquitin-protein ligase complex RTT101(MMS1-CRT10). RTT101(MMS1-CRT10) may regulate nucleotide synthesis through transcriptional regulation of RNR genes encoding ribonucleotide reductases. This is Protein CRT10 (CRT10) from Saccharomyces cerevisiae (strain ATCC 204508 / S288c) (Baker's yeast).